Reading from the N-terminus, the 351-residue chain is Cobalt-precorrin-5B C(1)-methyltransferase (351 aa).

The protein belongs to the CbiD family.

The catalysed reaction is Co-precorrin-5B + S-adenosyl-L-methionine = Co-precorrin-6A + S-adenosyl-L-homocysteine. It functions in the pathway cofactor biosynthesis; adenosylcobalamin biosynthesis; cob(II)yrinate a,c-diamide from sirohydrochlorin (anaerobic route): step 6/10. Its function is as follows. Catalyzes the methylation of C-1 in cobalt-precorrin-5B to form cobalt-precorrin-6A. In Thermosipho africanus (strain TCF52B), this protein is Cobalt-precorrin-5B C(1)-methyltransferase.